Here is a 130-residue protein sequence, read N- to C-terminus: Histone H2A type 1-F (130 aa).

Residues 1 to 22 (MSGRGKQGGKARAKAKTRSSRA) are disordered. The residue at position 2 (serine 2) is a Phosphoserine; by RPS6KA5. Arginine 4 is modified (citrulline; alternate). Arginine 4 carries the post-translational modification Symmetric dimethylarginine; by PRMT5; alternate. Lysine 6 is modified (N6-(2-hydroxyisobutyryl)lysine; alternate). Residue lysine 6 is modified to N6-(beta-hydroxybutyryl)lysine; alternate. A compositionally biased stretch (basic residues) spans 7–19 (QGGKARAKAKTRS). N6-(2-hydroxyisobutyryl)lysine is present on lysine 10. Lysine 10 bears the N6-lactoyllysine; alternate mark. Residue lysine 37 is modified to N6-(2-hydroxyisobutyryl)lysine; alternate. Lysine 37 carries the N6-(beta-hydroxybutyryl)lysine; alternate modification. Lysine 37 carries the post-translational modification N6-crotonyllysine; alternate. 3 positions are modified to N6-(2-hydroxyisobutyryl)lysine: lysine 75, lysine 76, and lysine 96. An N6-glutaryllysine; alternate modification is found at lysine 96. The residue at position 105 (glutamine 105) is an N5-methylglutamine. Lysine 119 is modified (N6-(2-hydroxyisobutyryl)lysine; alternate). N6-crotonyllysine; alternate occurs at positions 119 and 120. N6-glutaryllysine; alternate is present on residues lysine 119 and lysine 120. Lysine 120 carries the N6-(beta-hydroxybutyryl)lysine; alternate modification. A Glycyl lysine isopeptide (Lys-Gly) (interchain with G-Cter in ubiquitin); alternate cross-link involves residue lysine 120. At threonine 121 the chain carries Phosphothreonine; by DCAF1. The residue at position 126 (lysine 126) is an N6-(beta-hydroxybutyryl)lysine; alternate. N6-crotonyllysine; alternate is present on lysine 126. Lysine 126 is subject to N6-glutaryllysine; alternate.

The protein belongs to the histone H2A family. In terms of assembly, the nucleosome is a histone octamer containing two molecules each of H2A, H2B, H3 and H4 assembled in one H3-H4 heterotetramer and two H2A-H2B heterodimers. The octamer wraps approximately 147 bp of DNA. In terms of processing, deiminated on Arg-4 in granulocytes upon calcium entry. Post-translationally, monoubiquitination of Lys-120 (H2AK119Ub) by RING1, TRIM37 and RNF2/RING2 complex gives a specific tag for epigenetic transcriptional repression and participates in X chromosome inactivation of female mammals. It is involved in the initiation of both imprinted and random X inactivation. Ubiquitinated H2A is enriched in inactive X chromosome chromatin. Ubiquitination of H2A functions downstream of methylation of 'Lys-27' of histone H3 (H3K27me). H2AK119Ub by RNF2/RING2 can also be induced by ultraviolet and may be involved in DNA repair. Following DNA double-strand breaks (DSBs), it is ubiquitinated through 'Lys-63' linkage of ubiquitin moieties by the E2 ligase UBE2N and the E3 ligases RNF8 and RNF168, leading to the recruitment of repair proteins to sites of DNA damage. Ubiquitination at Lys-14 and Lys-16 (H2AK13Ub and H2AK15Ub, respectively) in response to DNA damage is initiated by RNF168 that mediates monoubiquitination at these 2 sites, and 'Lys-63'-linked ubiquitin are then conjugated to monoubiquitin; RNF8 is able to extend 'Lys-63'-linked ubiquitin chains in vitro. H2AK119Ub and ionizing radiation-induced 'Lys-63'-linked ubiquitination (H2AK13Ub and H2AK15Ub) are distinct events. Phosphorylation on Ser-2 (H2AS1ph) is enhanced during mitosis. Phosphorylation on Ser-2 by RPS6KA5/MSK1 directly represses transcription. Acetylation of H3 inhibits Ser-2 phosphorylation by RPS6KA5/MSK1. Phosphorylation at Thr-121 (H2AT120ph) by DCAF1 is present in the regulatory region of many tumor suppresor genes and down-regulates their transcription. In terms of processing, symmetric dimethylation on Arg-4 by the PRDM1/PRMT5 complex may play a crucial role in the germ-cell lineage. Post-translationally, glutamine methylation at Gln-105 (H2AQ104me) by FBL is specifically dedicated to polymerase I. It is present at 35S ribosomal DNA locus and impairs binding of the FACT complex. Crotonylation (Kcr) is specifically present in male germ cells and marks testis-specific genes in post-meiotic cells, including X-linked genes that escape sex chromosome inactivation in haploid cells. Crotonylation marks active promoters and enhancers and confers resistance to transcriptional repressors. It is also associated with post-meiotically activated genes on autosomes. In terms of processing, hydroxybutyrylation of histones is induced by starvation. Post-translationally, lactylated in macrophages by EP300/P300 by using lactoyl-CoA directly derived from endogenous or exogenous lactate, leading to stimulates gene transcription.

Its subcellular location is the nucleus. It is found in the chromosome. In terms of biological role, core component of nucleosome. Nucleosomes wrap and compact DNA into chromatin, limiting DNA accessibility to the cellular machineries which require DNA as a template. Histones thereby play a central role in transcription regulation, DNA repair, DNA replication and chromosomal stability. DNA accessibility is regulated via a complex set of post-translational modifications of histones, also called histone code, and nucleosome remodeling. In Mus musculus (Mouse), this protein is Histone H2A type 1-F (Hist1h2af).